Consider the following 201-residue polypeptide: Ras-related protein Rab-1B (201 aa).

An N-acetylmethionine modification is found at methionine 1. The GTP site is built by serine 17, glycine 18, valine 19, glycine 20, lysine 21, serine 22, cysteine 23, tyrosine 33, threonine 34, glutamate 35, serine 36, serine 39, and threonine 40. Mg(2+) is bound at residue serine 22. Residues 30–45 (DDTYTESYISTIGVDF) carry the Switch 1 motif. Mg(2+) contacts are provided by threonine 40 and aspartate 63. Residues 64–83 (TAGQERFRTITSSYYRGAHG) are switch 2 region; required for interaction with REP1/CHM. The Switch 2 signature appears at 65–80 (AGQERFRTITSSYYRG). GTP-binding residues include glycine 66, asparagine 121, lysine 122, aspartate 124, serine 151, alanine 152, and lysine 153. Residues 174-201 (GPGAASGGERPNLKIDSTPVKPAGGGCC) form a disordered region. S-geranylgeranyl cysteine attachment occurs at residues cysteine 200 and cysteine 201. At cysteine 201 the chain carries Cysteine methyl ester.

This sequence belongs to the small GTPase superfamily. Rab family. In terms of assembly, interacts with MICAL1 and MICAL2. Interacts (in GTP-bound form) with MICALCL, MICAL1 and MILCAL3. Interacts with GDI1; the interaction requires the GDP-bound state. Interacts with CHM/REP1; the interaction requires the GDP-bound form and is necessary for prenylation by GGTase II. Interacts with RabGAP TBC1D20. Interacts (in GDP-bound form) with lipid phosphatase MTMR6 (via GRAM domain); the interaction regulates MTMR6 recruitment to the endoplasmic reticulum-Golgi intermediate compartment. Interacts (in GDP-bound form) with lipid phosphatase MTMR7. The cofactor is Mg(2+). Prenylated; by GGTase II, only after interaction of the substrate with Rab escort protein 1 (REP1).

The protein resides in the cytoplasm. The protein localises to the membrane. It localises to the preautophagosomal structure membrane. Its subcellular location is the perinuclear region. The catalysed reaction is GTP + H2O = GDP + phosphate + H(+). Regulated by guanine nucleotide exchange factors (GEFs) which promote the exchange of bound GDP for free GTP. Regulated by GTPase activating proteins (GAPs) including TBC1D20 which increases the GTP hydrolysis activity. Inhibited by GDP dissociation inhibitors (GDIs). The small GTPases Rab are key regulators of intracellular membrane trafficking, from the formation of transport vesicles to their fusion with membranes. Rabs cycle between an inactive GDP-bound form and an active GTP-bound form that is able to recruit to membranes different set of downstream effectors directly responsible for vesicle formation, movement, tethering and fusion. Plays a role in the initial events of the autophagic vacuole development which take place at specialized regions of the endoplasmic reticulum. Regulates vesicular transport between the endoplasmic reticulum and successive Golgi compartments. Required to modulate the compacted morphology of the Golgi. Promotes the recruitment of lipid phosphatase MTMR6 to the endoplasmic reticulum-Golgi intermediate compartment. The chain is Ras-related protein Rab-1B (RAB1B) from Macaca fascicularis (Crab-eating macaque).